We begin with the raw amino-acid sequence, 370 residues long: Homoserine O-acetyltransferase (370 aa).

In terms of domain architecture, AB hydrolase-1 spans 44–350 (NAILVAHAWT…AYGHDAFLLE (307 aa)). Ser-150 acts as the Nucleophile in catalysis. Arg-217 contributes to the substrate binding site. Active-site residues include Asp-311 and His-344. Asp-345 lines the substrate pocket.

This sequence belongs to the AB hydrolase superfamily. MetX family. As to quaternary structure, homodimer.

Its subcellular location is the cytoplasm. The enzyme catalyses L-homoserine + acetyl-CoA = O-acetyl-L-homoserine + CoA. Its pathway is amino-acid biosynthesis; L-methionine biosynthesis via de novo pathway; O-acetyl-L-homoserine from L-homoserine: step 1/1. In terms of biological role, transfers an acetyl group from acetyl-CoA to L-homoserine, forming acetyl-L-homoserine. The chain is Homoserine O-acetyltransferase from Geotalea uraniireducens (strain Rf4) (Geobacter uraniireducens).